An 814-amino-acid chain; its full sequence is DNA ligase (814 aa).

Residues 46–50 (DAEYD), 95–96 (SL), and Glu129 contribute to the NAD(+) site. Lys131 serves as the catalytic N6-AMP-lysine intermediate. Positions 152, 189, 305, and 329 each coordinate NAD(+). The Zn(2+) site is built by Cys434, Cys437, Cys458, and Cys464. The segment at 526-549 (SAQRRTEGEPAPKKPTKKKGEEED) is disordered. One can recognise a BRCT domain in the interval 735-814 (TSAAAFAGKT…DDWLAMLAEA (80 aa)).

The protein belongs to the NAD-dependent DNA ligase family. LigA subfamily. Mg(2+) is required as a cofactor. It depends on Mn(2+) as a cofactor.

It carries out the reaction NAD(+) + (deoxyribonucleotide)n-3'-hydroxyl + 5'-phospho-(deoxyribonucleotide)m = (deoxyribonucleotide)n+m + AMP + beta-nicotinamide D-nucleotide.. DNA ligase that catalyzes the formation of phosphodiester linkages between 5'-phosphoryl and 3'-hydroxyl groups in double-stranded DNA using NAD as a coenzyme and as the energy source for the reaction. It is essential for DNA replication and repair of damaged DNA. This chain is DNA ligase, found in Methylorubrum extorquens (strain CM4 / NCIMB 13688) (Methylobacterium extorquens).